Reading from the N-terminus, the 521-residue chain is Probable rhamnogalacturonase B (521 aa).

The signal sequence occupies residues 1–21 (MRLHAFTLLSLLGLVPSFAAA). A disulfide bond links cysteine 42 and cysteine 68. An N-linked (GlcNAc...) asparagine glycan is attached at asparagine 145. Aspartate 219 (proton donor) is an active-site residue. A disulfide bridge connects residues cysteine 221 and cysteine 238. Residue asparagine 239 is glycosylated (N-linked (GlcNAc...) asparagine). The active site involves histidine 294. Asparagine 321 carries N-linked (GlcNAc...) asparagine glycosylation. 2 disulfides stabilise this stretch: cysteine 344/cysteine 350 and cysteine 372/cysteine 381. The tract at residues 462-521 (ETPAAASRSEQVVQGAPQETGQSAPESAGPVPSGNPGPVPTGGSRPSRHRHGHHHFGSAI) is disordered. Polar residues predominate over residues 469 to 486 (RSEQVVQGAPQETGQSAP). Basic residues predominate over residues 507 to 521 (PSRHRHGHHHFGSAI).

It belongs to the glycosyl hydrolase 28 family.

It is found in the secreted. It carries out the reaction Endohydrolysis of alpha-D-GalA-(1-&gt;2)-alpha-L-Rha glycosidic bond in the rhamnogalacturonan I backbone with initial inversion of anomeric configuration releasing oligosaccharides with beta-D-GalA at the reducing end.. In terms of biological role, pectinolytic enzymes consist of four classes of enzymes: pectine lyase, polygalacturonase, pectin methylesterase and rhamnogalacturonase. Hydrolyzes alpha-D-galacturonopyranosyl-(1,2)-alpha-L-rhamnopyranosyl linkages in the backbone of the hairy regions of pectins. The protein is Probable rhamnogalacturonase B (rhgB) of Aspergillus fumigatus (strain ATCC MYA-4609 / CBS 101355 / FGSC A1100 / Af293) (Neosartorya fumigata).